The following is a 335-amino-acid chain: Methionine import ATP-binding protein MetN 1 (335 aa).

The ABC transporter domain occupies 2–242; sequence IEFHNVHKTY…PQHATTRRFV (241 aa). An ATP-binding site is contributed by 38-45; that stretch reads GHSGAGKS.

Belongs to the ABC transporter superfamily. Methionine importer (TC 3.A.1.24) family. As to quaternary structure, the complex is composed of two ATP-binding proteins (MetN), two transmembrane proteins (MetI) and a solute-binding protein (MetQ).

It is found in the cell inner membrane. It catalyses the reaction L-methionine(out) + ATP + H2O = L-methionine(in) + ADP + phosphate + H(+). The enzyme catalyses D-methionine(out) + ATP + H2O = D-methionine(in) + ADP + phosphate + H(+). Part of the ABC transporter complex MetNIQ involved in methionine import. Responsible for energy coupling to the transport system. The protein is Methionine import ATP-binding protein MetN 1 of Pseudomonas syringae pv. syringae (strain B728a).